A 309-amino-acid chain; its full sequence is Homoserine kinase (309 aa).

Residue 91–101 participates in ATP binding; sequence PIGSGLGSSAC.

Belongs to the GHMP kinase family. Homoserine kinase subfamily.

It localises to the cytoplasm. It carries out the reaction L-homoserine + ATP = O-phospho-L-homoserine + ADP + H(+). It participates in amino-acid biosynthesis; L-threonine biosynthesis; L-threonine from L-aspartate: step 4/5. Its function is as follows. Catalyzes the ATP-dependent phosphorylation of L-homoserine to L-homoserine phosphate. The protein is Homoserine kinase of Citrobacter koseri (strain ATCC BAA-895 / CDC 4225-83 / SGSC4696).